The sequence spans 257 residues: tRNA (guanine-N(1)-)-methyltransferase (257 aa).

Residues Gly-112 and 136-141 (LGDYVL) each bind S-adenosyl-L-methionine.

Belongs to the RNA methyltransferase TrmD family. In terms of assembly, homodimer.

The protein localises to the cytoplasm. It carries out the reaction guanosine(37) in tRNA + S-adenosyl-L-methionine = N(1)-methylguanosine(37) in tRNA + S-adenosyl-L-homocysteine + H(+). Its function is as follows. Specifically methylates guanosine-37 in various tRNAs. The sequence is that of tRNA (guanine-N(1)-)-methyltransferase from Salinispora arenicola (strain CNS-205).